We begin with the raw amino-acid sequence, 206 residues long: NADH-quinone oxidoreductase subunit C (206 aa).

This sequence belongs to the complex I 30 kDa subunit family. NDH-1 is composed of 14 different subunits. Subunits NuoB, C, D, E, F, and G constitute the peripheral sector of the complex.

The protein resides in the cell inner membrane. It carries out the reaction a quinone + NADH + 5 H(+)(in) = a quinol + NAD(+) + 4 H(+)(out). In terms of biological role, NDH-1 shuttles electrons from NADH, via FMN and iron-sulfur (Fe-S) centers, to quinones in the respiratory chain. The immediate electron acceptor for the enzyme in this species is believed to be ubiquinone. Couples the redox reaction to proton translocation (for every two electrons transferred, four hydrogen ions are translocated across the cytoplasmic membrane), and thus conserves the redox energy in a proton gradient. The polypeptide is NADH-quinone oxidoreductase subunit C (Nitrosomonas europaea (strain ATCC 19718 / CIP 103999 / KCTC 2705 / NBRC 14298)).